Here is a 485-residue protein sequence, read N- to C-terminus: 3-isopropylmalate dehydratase large subunit (485 aa).

[4Fe-4S] cluster contacts are provided by Cys-367, Cys-427, and Cys-430. A compositionally biased stretch (polar residues) spans 439 to 451 (SPGQRAASTSNRN). The segment at 439–462 (SPGQRAASTSNRNFEGRQGKGGRT) is disordered.

The protein belongs to the aconitase/IPM isomerase family. LeuC type 1 subfamily. Heterodimer of LeuC and LeuD. [4Fe-4S] cluster is required as a cofactor.

The enzyme catalyses (2R,3S)-3-isopropylmalate = (2S)-2-isopropylmalate. It participates in amino-acid biosynthesis; L-leucine biosynthesis; L-leucine from 3-methyl-2-oxobutanoate: step 2/4. In terms of biological role, catalyzes the isomerization between 2-isopropylmalate and 3-isopropylmalate, via the formation of 2-isopropylmaleate. This chain is 3-isopropylmalate dehydratase large subunit, found in Actinoplanes teichomyceticus.